Consider the following 199-residue polypeptide: 3-isopropylmalate dehydratase small subunit (199 aa).

It belongs to the LeuD family. LeuD type 1 subfamily. Heterodimer of LeuC and LeuD.

It catalyses the reaction (2R,3S)-3-isopropylmalate = (2S)-2-isopropylmalate. The protein operates within amino-acid biosynthesis; L-leucine biosynthesis; L-leucine from 3-methyl-2-oxobutanoate: step 2/4. Its function is as follows. Catalyzes the isomerization between 2-isopropylmalate and 3-isopropylmalate, via the formation of 2-isopropylmaleate. This chain is 3-isopropylmalate dehydratase small subunit, found in Mycobacteroides abscessus (strain ATCC 19977 / DSM 44196 / CCUG 20993 / CIP 104536 / JCM 13569 / NCTC 13031 / TMC 1543 / L948) (Mycobacterium abscessus).